A 272-amino-acid chain; its full sequence is Cytochrome b-c1 complex subunit Rieske-1, mitochondrial (272 aa).

Residues 1-60 (MLRVAGRRLFSVSQRSSTATSFVVSRDHTLSDGGGDSSSAPRSLPSADLSSYHRSLIRGF) constitute a mitochondrion transit peptide. The disordered stretch occupies residues 27–46 (DHTLSDGGGDSSSAPRSLPS). The Mitochondrial matrix portion of the chain corresponds to 61 to 109 (SSQVLAQGNEIGFGSEVPATVEAVKTPNSKIVYDDHNHERYPPGDPSKR). Residues 110–132 (AFAYFVLSGGRFVYASVLRLLVL) form a helical membrane-spanning segment. Residues 133 to 272 (KLIVSMSASK…FLEENKLLIG (140 aa)) lie on the Mitochondrial intermembrane side of the membrane. Positions 201 to 270 (VRVKNPEWLV…YSFLEENKLL (70 aa)) constitute a Rieske domain. Residues C215, H217, C234, and H237 each contribute to the [2Fe-2S] cluster site. C220 and C236 form a disulfide bridge.

The protein belongs to the Rieske iron-sulfur protein family. In terms of assembly, component of the ubiquinol-cytochrome c oxidoreductase (cytochrome b-c1 complex, complex III, CIII), a multisubunit enzyme composed of 10 subunits. The complex is composed of 3 respiratory subunits cytochrome b (MT-CYB), cytochrome c1 (CYC1-1 or CYC1-2) and Rieske protein (UCR1-1 or UCR1-2), 2 core protein subunits MPPalpha1 (or MPPalpha2) and MPPB, and 5 low-molecular weight protein subunits QCR7-1 (or QCR7-2), UCRQ-1 (or UCRQ-2), QCR9, UCRY and probably QCR6-1 (or QCR6-2). The complex exists as an obligatory dimer and forms supercomplexes (SCs) in the inner mitochondrial membrane with NADH-ubiquinone oxidoreductase (complex I, CI), resulting in different assemblies (supercomplexes SCI(1)III(2) and SCI(2)III(4)). The cofactor is [2Fe-2S] cluster.

The protein localises to the mitochondrion inner membrane. It carries out the reaction a quinol + 2 Fe(III)-[cytochrome c](out) = a quinone + 2 Fe(II)-[cytochrome c](out) + 2 H(+)(out). Component of the ubiquinol-cytochrome c oxidoreductase, a multisubunit transmembrane complex that is part of the mitochondrial electron transport chain which drives oxidative phosphorylation. The respiratory chain contains 3 multisubunit complexes succinate dehydrogenase (complex II, CII), ubiquinol-cytochrome c oxidoreductase (cytochrome b-c1 complex, complex III, CIII) and cytochrome c oxidase (complex IV, CIV), that cooperate to transfer electrons derived from NADH and succinate to molecular oxygen, creating an electrochemical gradient over the inner membrane that drives transmembrane transport and the ATP synthase. The cytochrome b-c1 complex catalyzes electron transfer from ubiquinol to cytochrome c, linking this redox reaction to translocation of protons across the mitochondrial inner membrane, with protons being carried across the membrane as hydrogens on the quinol. In the process called Q cycle, 2 protons are consumed from the matrix, 4 protons are released into the intermembrane space and 2 electrons are passed to cytochrome c. The Rieske protein is a catalytic core subunit containing a [2Fe-2S] iron-sulfur cluster. It cycles between 2 conformational states during catalysis to transfer electrons from the quinol bound in the Q(0) site in cytochrome b to cytochrome c1. This is Cytochrome b-c1 complex subunit Rieske-1, mitochondrial from Arabidopsis thaliana (Mouse-ear cress).